The sequence spans 243 residues: Triosephosphate isomerase (243 aa).

9–11 is a binding site for substrate; the sequence is NWK. Catalysis depends on histidine 96, which acts as the Electrophile. The active-site Proton acceptor is glutamate 165. Residues glycine 171, serine 204, and 225–226 each bind substrate; that span reads GG.

The protein belongs to the triosephosphate isomerase family. As to quaternary structure, homodimer.

Its subcellular location is the cytoplasm. It carries out the reaction D-glyceraldehyde 3-phosphate = dihydroxyacetone phosphate. It participates in carbohydrate biosynthesis; gluconeogenesis. Its pathway is carbohydrate degradation; glycolysis; D-glyceraldehyde 3-phosphate from glycerone phosphate: step 1/1. Involved in the gluconeogenesis. Catalyzes stereospecifically the conversion of dihydroxyacetone phosphate (DHAP) to D-glyceraldehyde-3-phosphate (G3P). This chain is Triosephosphate isomerase, found in Prochlorococcus marinus (strain MIT 9211).